Consider the following 1123-residue polypeptide: Phytochrome 1 (1123 aa).

Low complexity predominate over residues 1 to 15 (MSTPKKTYSSTSSAK). The tract at residues 1–20 (MSTPKKTYSSTSSAKSKAHS) is disordered. In terms of domain architecture, GAF spans 216-395 (DIGLLCDTVV…VFGLQLNMEV (180 aa)). Cys-321 contributes to the phytochromobilin binding site. PAS domains are found at residues 610-681 (VANE…LRGE) and 744-815 (DYKT…TKFM). Positions 895–1115 (YIRQEIKNPL…VVNVELPMAQ (221 aa)) constitute a Histidine kinase domain.

This sequence belongs to the phytochrome family. As to quaternary structure, homodimer. Post-translationally, contains one covalently linked phytochromobilin chromophore.

The protein resides in the cytoplasm. In terms of biological role, regulatory photoreceptor which exists in two forms that are reversibly interconvertible by light: the Pr form that absorbs maximally in the red region of the spectrum and the Pfr form that absorbs maximally in the far-red region. Photoconversion of Pr to Pfr induces an array of morphogenetic responses, whereas reconversion of Pfr to Pr cancels the induction of those responses. Pfr controls the expression of a number of nuclear genes including those encoding the small subunit of ribulose-bisphosphate carboxylase, chlorophyll A/B binding protein, protochlorophyllide reductase, rRNA, etc. It also controls the expression of its own gene(s) in a negative feedback fashion. Mediates chloroplast avoidance movement in cytoplasm. The polypeptide is Phytochrome 1 (PHY1) (Physcomitrium patens (Spreading-leaved earth moss)).